The following is a 501-amino-acid chain: Lysine--tRNA ligase (501 aa).

2 residues coordinate Mg(2+): Glu406 and Glu413.

Belongs to the class-II aminoacyl-tRNA synthetase family. As to quaternary structure, homodimer. It depends on Mg(2+) as a cofactor.

It is found in the cytoplasm. The enzyme catalyses tRNA(Lys) + L-lysine + ATP = L-lysyl-tRNA(Lys) + AMP + diphosphate. The protein is Lysine--tRNA ligase (lysS) of Halalkalibacterium halodurans (strain ATCC BAA-125 / DSM 18197 / FERM 7344 / JCM 9153 / C-125) (Bacillus halodurans).